The chain runs to 125 residues: Large ribosomal subunit protein bL12 (125 aa).

This sequence belongs to the bacterial ribosomal protein bL12 family. As to quaternary structure, homodimer. Part of the ribosomal stalk of the 50S ribosomal subunit. Forms a multimeric L10(L12)X complex, where L10 forms an elongated spine to which 2 to 4 L12 dimers bind in a sequential fashion. Binds GTP-bound translation factors.

Functionally, forms part of the ribosomal stalk which helps the ribosome interact with GTP-bound translation factors. Is thus essential for accurate translation. The polypeptide is Large ribosomal subunit protein bL12 (Helicobacter pylori (strain ATCC 700392 / 26695) (Campylobacter pylori)).